A 481-amino-acid chain; its full sequence is MLPWELARFSIVKDEVLPHFATNEDLDLANEIISLFKAGKKLGEIDEEIEYLEKIYDHKLVRAFVKLLTRLCEFELDSPIPPIQIRRELFKYGPVLDEKEREDIIQKVSKKLGADIMRFVFSDLDEEKKIIKAPTISAEDLIRWYNLSLLQTLLFKAYKLTVYVSSNWKEIIRRAKWLGLMYFAYDKPLRFEFLGPATLVKLTEKYGRNLAVLLQFIISSQNWKIEAELVLGKKFKRVYKLKLANFKELKELVIDEKRFDSSVEEKFYKDFTNVIKGWKIIREPEPLVVDNRVFIPDFLVEKGNLKVYVEIVGFWTKEYIKEKLDKLKKVKYPILILLNEELGKEKFNGMNVITYKRKIDISLVYKWLRELENKYLNEVKVDYTISGDIISLNEIASKLSLPVEVIRKNIKIFPGYIFLKNYYVSEKFLEKLRNENFDNKSLKELVSAYGDYIVEVLEFLGYKLKWQGISDAIVIKDKKVN.

An N-terminal domain (NTD) region spans residues 1–136 (MLPWELARFS…EKKIIKAPTI (136 aa)). The interval 158–250 (YKLTVYVSSN…LKLANFKELK (93 aa)) is central domain (CRD). The interval 260 to 364 (DSSVEEKFYK…YKRKIDISLV (105 aa)) is nuclease domain (NUS). A divalent metal cation-binding residues include glutamate 265, aspartate 297, and glutamate 310. Residues 414 to 481 (PGYIFLKNYY…AIVIKDKKVN (68 aa)) are C-terminal domain (CTD).

This sequence belongs to the Bax1 family. In terms of assembly, homodimer in solution, forms a heterodimer with XPB2. The cofactor is a divalent metal cation.

In terms of biological role, a dual DNA endonuclease probably involved in nucleotide excision repair (NER). The N-terminal nuclease domain (NTD) of the XPB2-Bax1 complex cleaves on one side of a DNA bubble (which presumably mimics DNA damage), while the NUS nuclease domain cleaves the other side, respectively called 5' and 3' nuclease activities. Interaction with XPB blocks the NTD nuclease activity. Binds to and stimulates the ATPase activity (and probably also helicase activity) of XPB2. Increases affinity of XPB2 for forked DNA. Does not stimulate the DNA-dependent activity of XPB1. In an XPB2-Bax1-bubble DNA crystal (12 bp of dsDNA, a 6 base bubble and 6 bp of dsDNA) the short 6 bp arm is unwound. The 2 helicase and the ThM domains of XPB2 with the NTD and CRD domains of Bax1 encircle the DNA, forming a tunnel where the 12 bp dsDNA and the ds-ssDNA junction are located. The ThM domain is wedged between the ssDNA tails, with the 5' ssDNA contacting Bax1 and the 3' ssDNA in a channel in XPB2. The nuclease domain (NUS) of Bax1 does not contact DNA in the bubble DNA complex. The sequence is that of Endonuclease Bax1 from Sulfurisphaera tokodaii (strain DSM 16993 / JCM 10545 / NBRC 100140 / 7) (Sulfolobus tokodaii).